The chain runs to 220 residues: Histone deacetylase complex subunit SAP30 (220 aa).

The segment at 1 to 129 is interaction with NCOR1; sequence MNGFTPEEMS…QSVRNRRKRK (129 aa). Threonine 5 carries the phosphothreonine modification. An Atypical zinc finger spans residues 67–115; it reads CCLREDGERCGRAAGNASFSKRIQKSISQKKVKIELDKSARHLYICDYH. Lysine 87 participates in a covalent cross-link: Glycyl lysine isopeptide (Lys-Gly) (interchain with G-Cter in SUMO2). Residues 123–143 form a disordered region; sequence RNRRKRKGSDDDGGDSPVQDI. The tract at residues 130-220 is interaction with SIN3A; the sequence is GSDDDGGDSP…SDLKADSGVH (91 aa). Serine 131 and serine 138 each carry phosphoserine. Position 145 is a phosphothreonine (threonine 145). Residues lysine 194 and lysine 214 each participate in a glycyl lysine isopeptide (Lys-Gly) (interchain with G-Cter in SUMO2) cross-link.

Belongs to the SAP30 family. As to quaternary structure, component of the histone deacetylase complex that includes at least SIN3A, HDAC1 and HDAC2. Found in a complex composed of at least SINHCAF, SIN3A, HDAC1, SAP30, RBBP4, OGT and TET1. Interacts with HDAC1. Interacts with SIN3A, SIN3B, HDAC2, RBBP4 and NCOR1. Interacts directly with SAMSN1. Interacts with HCFC1. Interacts with SAP30BP.

The protein localises to the nucleus. Functionally, involved in the functional recruitment of the Sin3-histone deacetylase complex (HDAC) to a specific subset of N-CoR corepressor complexes. Capable of transcription repression by N-CoR. Active in deacetylating core histone octamers (when in a complex) but inactive in deacetylating nucleosomal histones. This chain is Histone deacetylase complex subunit SAP30, found in Mus musculus (Mouse).